The primary structure comprises 308 residues: Glutaminase (308 aa).

S66, N117, E161, N168, Y192, Y244, and V262 together coordinate substrate.

Belongs to the glutaminase family. Homotetramer.

It catalyses the reaction L-glutamine + H2O = L-glutamate + NH4(+). The chain is Glutaminase from Salmonella choleraesuis (strain SC-B67).